The chain runs to 157 residues: Crossover junction endodeoxyribonuclease RuvC (157 aa).

Catalysis depends on residues Asp-7, Glu-66, and Asp-139. Residues Asp-7, Glu-66, and Asp-139 each coordinate Mg(2+).

This sequence belongs to the RuvC family. Homodimer which binds Holliday junction (HJ) DNA. The HJ becomes 2-fold symmetrical on binding to RuvC with unstacked arms; it has a different conformation from HJ DNA in complex with RuvA. In the full resolvosome a probable DNA-RuvA(4)-RuvB(12)-RuvC(2) complex forms which resolves the HJ. The cofactor is Mg(2+).

It is found in the cytoplasm. It catalyses the reaction Endonucleolytic cleavage at a junction such as a reciprocal single-stranded crossover between two homologous DNA duplexes (Holliday junction).. In terms of biological role, the RuvA-RuvB-RuvC complex processes Holliday junction (HJ) DNA during genetic recombination and DNA repair. Endonuclease that resolves HJ intermediates. Cleaves cruciform DNA by making single-stranded nicks across the HJ at symmetrical positions within the homologous arms, yielding a 5'-phosphate and a 3'-hydroxyl group; requires a central core of homology in the junction. The consensus cleavage sequence is 5'-(A/T)TT(C/G)-3'. Cleavage occurs on the 3'-side of the TT dinucleotide at the point of strand exchange. HJ branch migration catalyzed by RuvA-RuvB allows RuvC to scan DNA until it finds its consensus sequence, where it cleaves and resolves the cruciform DNA. The protein is Crossover junction endodeoxyribonuclease RuvC of Campylobacter concisus (strain 13826).